The following is a 284-amino-acid chain: NAD kinase (284 aa).

The active-site Proton acceptor is aspartate 70. Residues 70–71 (DG), 139–140 (NE), lysine 167, aspartate 169, leucine 177, 180–185 (TAYNLS), and glutamine 236 contribute to the NAD(+) site.

Belongs to the NAD kinase family. Requires a divalent metal cation as cofactor.

The protein localises to the cytoplasm. The enzyme catalyses NAD(+) + ATP = ADP + NADP(+) + H(+). Its function is as follows. Involved in the regulation of the intracellular balance of NAD and NADP, and is a key enzyme in the biosynthesis of NADP. Catalyzes specifically the phosphorylation on 2'-hydroxyl of the adenosine moiety of NAD to yield NADP. The chain is NAD kinase from Helicobacter pylori (strain P12).